A 98-amino-acid chain; its full sequence is Putative pterin-4-alpha-carbinolamine dehydratase (98 aa).

It belongs to the pterin-4-alpha-carbinolamine dehydratase family.

It catalyses the reaction (4aS,6R)-4a-hydroxy-L-erythro-5,6,7,8-tetrahydrobiopterin = (6R)-L-erythro-6,7-dihydrobiopterin + H2O. In Mesorhizobium japonicum (strain LMG 29417 / CECT 9101 / MAFF 303099) (Mesorhizobium loti (strain MAFF 303099)), this protein is Putative pterin-4-alpha-carbinolamine dehydratase.